Reading from the N-terminus, the 184-residue chain is NADH-quinone oxidoreductase subunit B (184 aa).

[4Fe-4S] cluster contacts are provided by Cys37, Cys38, Cys103, and Cys132.

Belongs to the complex I 20 kDa subunit family. NDH-1 is composed of 14 different subunits. Subunits NuoB, C, D, E, F, and G constitute the peripheral sector of the complex. Requires [4Fe-4S] cluster as cofactor.

The protein resides in the cell membrane. It catalyses the reaction a quinone + NADH + 5 H(+)(in) = a quinol + NAD(+) + 4 H(+)(out). NDH-1 shuttles electrons from NADH, via FMN and iron-sulfur (Fe-S) centers, to quinones in the respiratory chain. The immediate electron acceptor for the enzyme in this species is believed to be a menaquinone. Couples the redox reaction to proton translocation (for every two electrons transferred, four hydrogen ions are translocated across the cytoplasmic membrane), and thus conserves the redox energy in a proton gradient. The protein is NADH-quinone oxidoreductase subunit B of Mycobacterium bovis (strain BCG / Pasteur 1173P2).